Here is a 187-residue protein sequence, read N- to C-terminus: Mast cell-expressed membrane protein 1 (187 aa).

The Cytoplasmic segment spans residues 1-85 (MEVEEIYKHQ…PCWLYRAILS (85 aa)). The segment at 49–71 (DHAKGGHSRPTSQVPAQCRPPSD) is disordered. A helical; Signal-anchor for type II membrane protein membrane pass occupies residues 86 to 106 (LYILLALAFVLCIILSAFIMV). Topologically, residues 107 to 187 (KNAEMSKELL…LQKMPQSSPQ (81 aa)) are extracellular. Residue Asn-124 is glycosylated (N-linked (GlcNAc...) asparagine).

As to expression, expressed specifically in mast cells. Found primarily in lung.

The protein localises to the membrane. The chain is Mast cell-expressed membrane protein 1 from Homo sapiens (Human).